We begin with the raw amino-acid sequence, 104 residues long: Nucleoid-associated protein EF_2780 (104 aa).

It belongs to the YbaB/EbfC family. As to quaternary structure, homodimer.

Its subcellular location is the cytoplasm. The protein resides in the nucleoid. Binds to DNA and alters its conformation. May be involved in regulation of gene expression, nucleoid organization and DNA protection. The polypeptide is Nucleoid-associated protein EF_2780 (Enterococcus faecalis (strain ATCC 700802 / V583)).